A 158-amino-acid polypeptide reads, in one-letter code: Methylated-DNA--protein-cysteine methyltransferase (158 aa).

Cys126 functions as the Nucleophile; methyl group acceptor in the catalytic mechanism.

This sequence belongs to the MGMT family.

It localises to the cytoplasm. It carries out the reaction a 6-O-methyl-2'-deoxyguanosine in DNA + L-cysteinyl-[protein] = S-methyl-L-cysteinyl-[protein] + a 2'-deoxyguanosine in DNA. The enzyme catalyses a 4-O-methyl-thymidine in DNA + L-cysteinyl-[protein] = a thymidine in DNA + S-methyl-L-cysteinyl-[protein]. Its function is as follows. Involved in the cellular defense against the biological effects of O6-methylguanine (O6-MeG) and O4-methylthymine (O4-MeT) in DNA. Repairs the methylated nucleobase in DNA by stoichiometrically transferring the methyl group to a cysteine residue in the enzyme. This is a suicide reaction: the enzyme is irreversibly inactivated. The chain is Methylated-DNA--protein-cysteine methyltransferase from Methanosarcina mazei (strain ATCC BAA-159 / DSM 3647 / Goe1 / Go1 / JCM 11833 / OCM 88) (Methanosarcina frisia).